The sequence spans 612 residues: Protein hinderin (612 aa).

Ser-20 carries the phosphoserine modification. Positions 90 to 166 (LKDLCLEDKR…CQELLSLYQK (77 aa)) form a coiled coil. Ser-178 carries the phosphoserine modification. A coiled-coil region spans residues 362 to 406 (IEKQLSEDRRQQLMLQKMELEIEKERLQHLLAQQETKLLLKQQQL). Residues 462 to 477 (STSFKKCPDSPNSGQN) show a composition bias toward polar residues. Disordered stretches follow at residues 462-484 (STSF…KKTV) and 509-598 (ETVT…RSPE). Phosphoserine is present on residues Ser-471, Ser-527, and Ser-558. Polar residues-rich tracts occupy residues 555-568 (QSLS…SQPH) and 575-585 (TWSTLRPTPQK).

Interacts (via N- and C-terminal domains) with SMC3 (via central hinge region).

Its function is as follows. Competes with SMC1 for binding to SMC3. May affect the availability of SMC3 to engage in the formation of multimeric protein complexes. This Mus musculus (Mouse) protein is Protein hinderin (Kiaa1328).